A 296-amino-acid polypeptide reads, in one-letter code: Pyridoxine/pyridoxal/pyridoxamine kinase (296 aa).

Residues S23 and H59 each contribute to the substrate site. Position 125 (D125) interacts with ATP. A Mg(2+)-binding site is contributed by Y136. Residues T157, E162, T195, 222–225 (HQRV), and T232 contribute to the ATP site. E162 provides a ligand contact to Mg(2+). Residue D234 participates in substrate binding.

Belongs to the pyridoxine kinase family. PdxK subfamily. In terms of assembly, homodimer. Requires Mg(2+) as cofactor.

It catalyses the reaction pyridoxal + ATP = pyridoxal 5'-phosphate + ADP + H(+). It carries out the reaction pyridoxine + ATP = pyridoxine 5'-phosphate + ADP + H(+). The enzyme catalyses pyridoxamine + ATP = pyridoxamine 5'-phosphate + ADP + H(+). It participates in cofactor metabolism; pyridoxal 5'-phosphate salvage; pyridoxal 5'-phosphate from pyridoxal: step 1/1. The protein operates within cofactor metabolism; pyridoxal 5'-phosphate salvage; pyridoxine 5'-phosphate from pyridoxine: step 1/1. It functions in the pathway cofactor metabolism; pyridoxal 5'-phosphate salvage; pyridoxamine 5'-phosphate from pyridoxamine: step 1/1. B6-vitamer kinase involved in the salvage pathway of pyridoxal 5'-phosphate (PLP). Catalyzes the phosphorylation of pyridoxine (PN), pyridoxal (PL), and pyridoxamine (PM), forming their respective 5'-phosphorylated esters, i.e. PNP, PLP and PMP. The chain is Pyridoxine/pyridoxal/pyridoxamine kinase from Bordetella avium (strain 197N).